The primary structure comprises 279 residues: Expansin-A22 (279 aa).

Residues Met1–Gly27 form the signal peptide. An Expansin-like EG45 domain is found at Gln76–Gly186. The 80-residue stretch at Tyr196–Gly275 folds into the Expansin-like CBD domain.

Belongs to the expansin family. Expansin A subfamily.

The protein resides in the secreted. It is found in the cell wall. The protein localises to the membrane. Its function is as follows. Causes loosening and extension of plant cell walls by disrupting non-covalent bonding between cellulose microfibrils and matrix glucans. No enzymatic activity has been found. This is Expansin-A22 (EXPA22) from Arabidopsis thaliana (Mouse-ear cress).